The chain runs to 65 residues: Large ribosomal subunit protein uL29 (65 aa).

It belongs to the universal ribosomal protein uL29 family.

This Buchnera aphidicola subsp. Acyrthosiphon pisum (strain 5A) protein is Large ribosomal subunit protein uL29.